We begin with the raw amino-acid sequence, 20 residues long: Trypsin inhibitor (20 aa).

Positions 1-20 are disordered; that stretch reads APSDTTIAETLTITEEFFPD.

As to expression, hemolymph.

The protein localises to the secreted. It is found in the extracellular space. Functionally, inhibits trypsin stoichiometrically. Also inhibits chymotrypsin very weakly. The sequence is that of Trypsin inhibitor from Mythimna unipuncta (Armyworm moth).